We begin with the raw amino-acid sequence, 119 residues long: Acidic phospholipase A2 DE-II (119 aa).

Intrachain disulfides connect cysteine 11/cysteine 72, cysteine 26/cysteine 118, cysteine 28/cysteine 44, cysteine 43/cysteine 99, cysteine 50/cysteine 92, cysteine 60/cysteine 85, and cysteine 79/cysteine 90. The Ca(2+) site is built by tyrosine 27, glycine 29, and glycine 31. Residue histidine 47 is part of the active site. Aspartate 48 lines the Ca(2+) pocket. Aspartate 93 is an active-site residue.

This sequence belongs to the phospholipase A2 family. Group I subfamily. D49 sub-subfamily. Ca(2+) serves as cofactor. In terms of tissue distribution, expressed by the venom gland.

It is found in the secreted. The catalysed reaction is a 1,2-diacyl-sn-glycero-3-phosphocholine + H2O = a 1-acyl-sn-glycero-3-phosphocholine + a fatty acid + H(+). Functionally, PLA2 catalyzes the calcium-dependent hydrolysis of the 2-acyl groups in 3-sn-phosphoglycerides. In Naja melanoleuca (Forest cobra), this protein is Acidic phospholipase A2 DE-II.